The chain runs to 491 residues: Chromosomal replication initiator protein DnaA (491 aa).

The segment at Met-1–Asp-68 is domain I, interacts with DnaA modulators. The interval Asp-68 to Ser-146 is domain II. The segment at Arg-147 to Ala-364 is domain III, AAA+ region. ATP is bound by residues Gly-190, Gly-192, Lys-193, and Thr-194. Residues Lys-365–His-491 are domain IV, binds dsDNA.

Belongs to the DnaA family. As to quaternary structure, oligomerizes as a right-handed, spiral filament on DNA at oriC.

The protein localises to the cytoplasm. Its function is as follows. Plays an essential role in the initiation and regulation of chromosomal replication. ATP-DnaA binds to the origin of replication (oriC) to initiate formation of the DNA replication initiation complex once per cell cycle. Binds the DnaA box (a 9 base pair repeat at the origin) and separates the double-stranded (ds)DNA. Forms a right-handed helical filament on oriC DNA; dsDNA binds to the exterior of the filament while single-stranded (ss)DNA is stabiized in the filament's interior. The ATP-DnaA-oriC complex binds and stabilizes one strand of the AT-rich DNA unwinding element (DUE), permitting loading of DNA polymerase. After initiation quickly degrades to an ADP-DnaA complex that is not apt for DNA replication. Binds acidic phospholipids. The sequence is that of Chromosomal replication initiator protein DnaA from Nitratidesulfovibrio vulgaris (strain ATCC 29579 / DSM 644 / CCUG 34227 / NCIMB 8303 / VKM B-1760 / Hildenborough) (Desulfovibrio vulgaris).